Consider the following 488-residue polypeptide: Glutamyl-tRNA(Gln) amidotransferase subunit A (488 aa).

Catalysis depends on charge relay system residues Lys77 and Ser152. The active-site Acyl-ester intermediate is the Ser176.

This sequence belongs to the amidase family. GatA subfamily. Heterotrimer of A, B and C subunits.

It catalyses the reaction L-glutamyl-tRNA(Gln) + L-glutamine + ATP + H2O = L-glutaminyl-tRNA(Gln) + L-glutamate + ADP + phosphate + H(+). Functionally, allows the formation of correctly charged Gln-tRNA(Gln) through the transamidation of misacylated Glu-tRNA(Gln) in organisms which lack glutaminyl-tRNA synthetase. The reaction takes place in the presence of glutamine and ATP through an activated gamma-phospho-Glu-tRNA(Gln). This chain is Glutamyl-tRNA(Gln) amidotransferase subunit A, found in Latilactobacillus sakei subsp. sakei (strain 23K) (Lactobacillus sakei subsp. sakei).